Here is a 731-residue protein sequence, read N- to C-terminus: Two pore channel protein 2 (731 aa).

At 1-68 (MAAEEQPLLG…RWYYSNVCQR (68 aa)) the chain is on the cytoplasmic side. Residues 69–89 (VLGFIIFLILILAFVEVPSSF) traverse the membrane as a helical segment. Topologically, residues 90-111 (TKTADVRYRSQPWQPPCGLTET) are extracellular. The helical transmembrane segment at 112-132 (IEAFCLLAFLVDLSVKGYLVG) threads the bilayer. The Cytoplasmic portion of the chain corresponds to 133–139 (QAQLQQN). Residues 140 to 160 (LWLLAYFMVLVVSVVDWIVSL) traverse the membrane as a helical segment. The Extracellular segment spans residues 161-167 (SLACEEP). The helical transmembrane segment at 168–188 (LRMRRLLRPFFLLQNSSMMKK) threads the bilayer. The segment at 187–191 (KKTLK) is interaction with phosphatidylinositol 3,5-bisphosphate. The Cytoplasmic segment spans residues 189–203 (TLKCIRWSLPEMASV). The chain crosses the membrane as a helical span at residues 204-224 (GLLLAIHLCLFTIIGMLLFTI). At 225 to 238 (GEKDEAQDQERLAY) the chain is on the extracellular side. The helical; Pore-forming intramembrane region spans 239-263 (FRNLPEALTSLLVLLTTSNNPDVMI). The Extracellular portion of the chain corresponds to 264–270 (PAYTQNR). A helical transmembrane segment spans residues 271-291 (AFALFFIVFTLIGSLFLMNLL). The Cytoplasmic portion of the chain corresponds to 292 to 417 (TAIIYNQFRG…TAQFIFSHHY (126 aa)). A helical transmembrane segment spans residues 418–438 (FDYLGNLVALGNLLSICVFLV). The Extracellular segment spans residues 439 to 449 (LDSDLLPGERD). A helical transmembrane segment spans residues 450–470 (DFVLGILDYIFILYYLLELLF). Residues 471–486 (KVFALGLPGYLSYHSN) lie on the Cytoplasmic side of the membrane. A helical membrane pass occupies residues 487–507 (VFDGLLTIILLVSEICTLAVY). Topologically, residues 508–524 (RLPHSGWKPEQYGPLSL) are extracellular. A helical membrane pass occupies residues 525-542 (WDMTRLMNTLIVFRFLRI). Residues 543–564 (IPNIKPMAEVANTILGLIPNLR) lie on the Cytoplasmic side of the membrane. A helical membrane pass occupies residues 565-585 (AFGGILVVAYYVFAMIGINLF). Residues 586 to 618 (RGVIVPPGNSSLVPDNNSAVCGSFEQLGYWPNN) lie on the Extracellular side of the membrane. N-linked (GlcNAc...) asparagine glycans are attached at residues asparagine 594 and asparagine 601. The segment at residues 619–641 (FDDFAAALITLWNVMVVNNWQVI) is an intramembrane region (helical; Pore-forming). The Extracellular portion of the chain corresponds to 642 to 656 (LEAYKRYAGPWSMVY). A helical membrane pass occupies residues 657-677 (FVLWWLVSSVIWINLFLALLL). Topologically, residues 678-731 (ENFLHRWDPQGHKQLLVGTKQMSVELMFRDILEEPKEEELMEKLHKHPHLHLCR) are cytoplasmic.

This sequence belongs to the calcium channel alpha-1 subunit (TC 1.A.1.11) family. Two pore calcium channel subfamily. In terms of assembly, homodimer. Interacts with LRRK2. Interacts with HAX1. Interacts with MTOR; the interaction is required for TPCN2 ATP sensitivity. Found in a complex with LSM12, TPCN1 and TPCN2. Interacts with LSM12. In terms of processing, N-glycosylated. In terms of tissue distribution, widely expressed. Highly expressed in macrophages. Expressed in pigmented cells.

It localises to the late endosome membrane. Its subcellular location is the lysosome membrane. It is found in the melanosome membrane. The catalysed reaction is Ca(2+)(in) = Ca(2+)(out). It catalyses the reaction Na(+)(in) = Na(+)(out). With respect to regulation, regulated by Mg(2+) ions, cytosolic Mg(2+) selectively inhibits outward current while lysosomal Mg(2+) modestly inhibits both the outward and inward currents. In the absence of Mg(2+), NAADP readily activates TPCN2, with properties similar to PI(3,5)P2. Na(+) current is inhibited by ATP in a MTORC-dependent manner. ATP sensitivity is independent of PI(3,5)P2. Both current elicited by PI(3,5)P2 as well as NAADP are inhibited by tetrandrine. In terms of biological role, intracellular channel initially characterized as a non-selective Ca(2+)-permeable channel activated by NAADP (nicotinic acid adenine dinucleotide phosphate), it is also a highly-selective Na(+) channel activated directly by PI(3,5)P2 (phosphatidylinositol 3,5-bisphosphate). Localizes to the lysosomal and late endosome membranes where it regulates organellar membrane excitability, membrane trafficking, and pH homeostasis. Is associated with a plethora of physiological processes, including mTOR-dependent nutrient sensing, skin pigmentation and autophagy. Ion selectivity is not fixed but rather agonist-dependent and under defined ionic conditions, can be readily activated by both NAADP and PI(3,5)P2. As calcium channel, it increases the pH in the lysosomal lumen, as sodium channel, it promotes lysosomal exocytosis. Plays a crucial role in endolysosomal trafficking in the endolysosomal degradation pathway and is potentially involved in the homeostatic control of many macromolecules and cell metabolites. Also expressed in melanosomes of pigmented cells where mediates a Ca(2+) channel and/or PI(3,5)P2-activated melanosomal Na(+) channel to acidify pH and inhibit tyrosinase activity required for melanogenesis and pigmentation. Unlike the voltage-dependent TPCN1, TPCN2 is voltage independent and can be activated solely by PI(3,5)P2 binding. In contrast, PI(4,5)P2, PI(3,4)P2, PI(3)P and PI(5)P have no obvious effect on channel activation. (Microbial infection) During Ebola virus (EBOV) infection, controls the movement of endosomes containing virus particles and is required by EBOV to escape from the endosomal network into the cell cytoplasm. This chain is Two pore channel protein 2, found in Mus musculus (Mouse).